A 380-amino-acid chain; its full sequence is Histidinol-phosphate aminotransferase (380 aa).

The residue at position 232 (lysine 232) is an N6-(pyridoxal phosphate)lysine.

It belongs to the class-II pyridoxal-phosphate-dependent aminotransferase family. Histidinol-phosphate aminotransferase subfamily. In terms of assembly, homodimer. Pyridoxal 5'-phosphate is required as a cofactor.

It catalyses the reaction L-histidinol phosphate + 2-oxoglutarate = 3-(imidazol-4-yl)-2-oxopropyl phosphate + L-glutamate. It functions in the pathway amino-acid biosynthesis; L-histidine biosynthesis; L-histidine from 5-phospho-alpha-D-ribose 1-diphosphate: step 7/9. This chain is Histidinol-phosphate aminotransferase, found in Mycobacterium bovis (strain BCG / Pasteur 1173P2).